The sequence spans 422 residues: UPF0761 membrane protein Paes_1471 (422 aa).

6 helical membrane-spanning segments follow: residues 47–67 (LLSI…SPVF), 103–123 (SVPT…ISTI), 143–163 (FTLY…SLVA), 185–205 (LLLL…ILVP), 208–228 (KVKF…FEFS), and 247–267 (GALS…VVAL).

This sequence belongs to the UPF0761 family.

The protein resides in the cell inner membrane. The sequence is that of UPF0761 membrane protein Paes_1471 from Prosthecochloris aestuarii (strain DSM 271 / SK 413).